Reading from the N-terminus, the 287-residue chain is Tetraspanning orphan receptor (287 aa).

Topologically, residues 1–27 (MSPSLVSDTQKHERGSHGVKIKHFSPY) are extracellular. The helical transmembrane segment at 28–48 (IAVCVTTFSLAFCCFMVHGAI) threads the bilayer. Residues 49–55 (TRQPTHL) are Cytoplasmic-facing. A helical membrane pass occupies residues 56–76 (LPFFFIQVFDLIICLIHILGF). The Extracellular portion of the chain corresponds to 77-91 (MSSTSDIRLVIHTKT). Residues 92–114 (GPIYIKSTGLTFIILSISRMMLA) traverse the membrane as a helical segment. Topologically, residues 115–287 (FKAYCLGMVW…NASSNAHSSC (173 aa)) are cytoplasmic. The interval 165–190 (NNSIGNSGSPNEPNTRPRPDTITYDP) is disordered.

Interacts (via N-terminal extracellular domain) with human C2a.

Its subcellular location is the cell membrane. Its function is as follows. Cell surface receptor that binds to human complement C2a protein. This results in inhibition of the classical and lectin pathways of complement activation, probably due to interference with binding of C2a to C4b and interference with cleavage by C1 or MASP2 such that C3 convertase cannot be formed. This infers resistance to complement-mediated cell lysis, allowing parasite survival and infection. This Trypanosoma cruzi protein is Tetraspanning orphan receptor.